We begin with the raw amino-acid sequence, 200 residues long: Lipid A acyltransferase PagP (200 aa).

Positions 1-24 are cleaved as a signal peptide; it reads MRLKLTSHTCLFALSSLLVTPAFA. Active-site residues include H72, D115, and S116.

It belongs to the lipid A palmitoyltransferase family. Homodimer.

The protein resides in the cell outer membrane. The catalysed reaction is a lipid A + a 1,2-diacyl-sn-glycero-3-phosphocholine = a hepta-acyl lipid A + a 2-acyl-sn-glycero-3-phosphocholine. It carries out the reaction a lipid IVA + a 1,2-diacyl-sn-glycero-3-phosphocholine = a lipid IVB + a 2-acyl-sn-glycero-3-phosphocholine. The enzyme catalyses a lipid IIA + a 1,2-diacyl-sn-glycero-3-phosphocholine = a lipid IIB + a 2-acyl-sn-glycero-3-phosphocholine. In terms of biological role, transfers a fatty acid residue from the sn-1 position of a phospholipid to the N-linked hydroxyfatty acid chain on the proximal unit of lipid A or its precursors. This Dickeya dadantii (strain 3937) (Erwinia chrysanthemi (strain 3937)) protein is Lipid A acyltransferase PagP.